The following is a 526-amino-acid chain: Peptide chain release factor 3 (526 aa).

The 270-residue stretch at 8–277 folds into the tr-type G domain; sequence GKRRTFAIIS…GLTDWAPAPQ (270 aa). GTP contacts are provided by residues 17-24, 85-89, and 139-142; these read SHPDAGKT, DTPGH, and NKLD.

This sequence belongs to the TRAFAC class translation factor GTPase superfamily. Classic translation factor GTPase family. PrfC subfamily.

It localises to the cytoplasm. In terms of biological role, increases the formation of ribosomal termination complexes and stimulates activities of RF-1 and RF-2. It binds guanine nucleotides and has strong preference for UGA stop codons. It may interact directly with the ribosome. The stimulation of RF-1 and RF-2 is significantly reduced by GTP and GDP, but not by GMP. The polypeptide is Peptide chain release factor 3 (Aliivibrio fischeri (strain MJ11) (Vibrio fischeri)).